The following is a 621-amino-acid chain: C4-dicarboxylate transport sensor protein DctB (621 aa).

Topologically, residues 1–26 (MHHVRMVKLPAEASDPHALRSRARRS) are cytoplasmic. The helical transmembrane segment at 27–45 (WLVFAAVALVLLAAGLLLA) threads the bilayer. At 46 to 320 (RDYGRSQALA…PLAAGAREAQ (275 aa)) the chain is on the periplasmic side. The helical transmembrane segment at 321–338 (LLTLAALVPLLALAALLL) threads the bilayer. The Cytoplasmic segment spans residues 339-621 (RRRQVVAMRS…TTFAVNLKKA (283 aa)). One can recognise a Histidine kinase domain in the interval 412-621 (GVAHEINQPV…TTFAVNLKKA (210 aa)). His-415 carries the phosphohistidine; by autocatalysis modification.

Autophosphorylated.

The protein localises to the cell inner membrane. It catalyses the reaction ATP + protein L-histidine = ADP + protein N-phospho-L-histidine.. In terms of biological role, member of the two-component regulatory system DctB/DctD involved in the transport of C4-dicarboxylates. DctB functions as a membrane-associated protein kinase that phosphorylates DctD in response to environmental signals. The chain is C4-dicarboxylate transport sensor protein DctB (dctB) from Rhizobium meliloti (strain 1021) (Ensifer meliloti).